Consider the following 418-residue polypeptide: Tyrosine--tRNA ligase (418 aa).

Tyr34 is a binding site for L-tyrosine. Positions 39–48 (PTADSLHLGH) match the 'HIGH' region motif. The L-tyrosine site is built by Tyr169 and Gln173. The 'KMSKS' region signature appears at 229–233 (KFGKS). Residue Lys232 participates in ATP binding. The S4 RNA-binding domain maps to 352–418 (LNLVDMLVTA…GKKKYAVLTY (67 aa)).

The protein belongs to the class-I aminoacyl-tRNA synthetase family. TyrS type 1 subfamily. In terms of assembly, homodimer.

The protein localises to the cytoplasm. The enzyme catalyses tRNA(Tyr) + L-tyrosine + ATP = L-tyrosyl-tRNA(Tyr) + AMP + diphosphate + H(+). Functionally, catalyzes the attachment of tyrosine to tRNA(Tyr) in a two-step reaction: tyrosine is first activated by ATP to form Tyr-AMP and then transferred to the acceptor end of tRNA(Tyr). The chain is Tyrosine--tRNA ligase from Streptococcus pyogenes serotype M12 (strain MGAS2096).